A 276-amino-acid chain; its full sequence is Rhomboid protease GlpG (276 aa).

Helical transmembrane passes span 94–114, 142–162, 169–189, 192–212, 229–249, and 250–270; these read GPVTWVMMIACVVVFIAMQIL, ALMHFSLMHILFNLLWWWYLG, LGSGKLIVITLISALLSGYVQ, FSGPWFGGLSGVVYALMGYVW, LIIFALIWIVAGWFDLFGMSM, and ANGAHIAGLAVGLAMAFVDSL. Residue S201 is the Nucleophile of the active site. The active site involves H254.

This sequence belongs to the peptidase S54 family.

The protein localises to the cell inner membrane. The catalysed reaction is Cleaves type-1 transmembrane domains using a catalytic dyad composed of serine and histidine that are contributed by different transmembrane domains.. Functionally, rhomboid-type serine protease that catalyzes intramembrane proteolysis. The sequence is that of Rhomboid protease GlpG from Escherichia fergusonii (strain ATCC 35469 / DSM 13698 / CCUG 18766 / IAM 14443 / JCM 21226 / LMG 7866 / NBRC 102419 / NCTC 12128 / CDC 0568-73).